The chain runs to 896 residues: Protein bride of sevenless (896 aa).

An N-terminal signal peptide occupies residues 1–31 (MKVMDALQSGRRKPLPVALLCILVTVFCVLE). Over 32–530 (CHGADLTSPT…MFWRIKMDTW (499 aa)) the chain is Extracellular. The segment at 38 to 84 (TSPTKKSAPLRITKPQPTSQQAKPISITTRAPTTVASTTDDEVSSSV) is disordered. Positions 52–64 (PQPTSQQAKPISI) are enriched in polar residues. The segment covering 65-84 (TTRAPTTVASTTDDEVSSSV) has biased composition (low complexity). Residues Asn183, Asn307, Asn474, and Asn485 are each glycosylated (N-linked (GlcNAc...) asparagine). The next 7 membrane-spanning stretches (helical) occupy residues 531-554 (VATG…FIVV), 570-588 (ILLL…PYSI), 615-637 (VFIM…VMLA), 655-676 (AVIC…LVVM), 693-712 (WLWG…GALI), 728-748 (IVIG…LSLF), and 759-781 (LGLQ…FLIV). The Cytoplasmic segment spans residues 782-896 (RGIERSDIAQ…SPDHNKITRF (115 aa)). Disordered regions lie at residues 825 to 844 (SQDE…PLRG) and 861 to 896 (ANIN…ITRF). The span at 874–884 (QSPSRSSVSSL) shows a compositional bias: low complexity.

Belongs to the G-protein coupled receptor 3 family. As to expression, expressed exclusively by R8 photoreceptor cells and is internalized in a sev-dependent manner by R7 cells.

The protein localises to the cell membrane. Functionally, acts as a ligand for sevenless tyrosine-kinase receptor during eye development. This is Protein bride of sevenless (boss) from Drosophila melanogaster (Fruit fly).